A 184-amino-acid polypeptide reads, in one-letter code: ATP synthase subunit b, chloroplastic (184 aa).

Residues 27 to 49 form a helical membrane-spanning segment; it reads LATNPINLSVVFGVLIFFGKGVL.

The protein belongs to the ATPase B chain family. As to quaternary structure, F-type ATPases have 2 components, F(1) - the catalytic core - and F(0) - the membrane proton channel. F(1) has five subunits: alpha(3), beta(3), gamma(1), delta(1), epsilon(1). F(0) has four main subunits: a(1), b(1), b'(1) and c(10-14). The alpha and beta chains form an alternating ring which encloses part of the gamma chain. F(1) is attached to F(0) by a central stalk formed by the gamma and epsilon chains, while a peripheral stalk is formed by the delta, b and b' chains.

The protein localises to the plastid. It is found in the chloroplast thylakoid membrane. Its function is as follows. F(1)F(0) ATP synthase produces ATP from ADP in the presence of a proton or sodium gradient. F-type ATPases consist of two structural domains, F(1) containing the extramembraneous catalytic core and F(0) containing the membrane proton channel, linked together by a central stalk and a peripheral stalk. During catalysis, ATP synthesis in the catalytic domain of F(1) is coupled via a rotary mechanism of the central stalk subunits to proton translocation. Functionally, component of the F(0) channel, it forms part of the peripheral stalk, linking F(1) to F(0). The sequence is that of ATP synthase subunit b, chloroplastic from Barbarea verna (Land cress).